A 522-amino-acid chain; its full sequence is Sugar transport protein MST2 (522 aa).

Residues 1 to 24 are Cytoplasmic-facing; the sequence is MAAATAADVAEDTASVYSGKLTLY. Residues 25 to 45 form a helical membrane-spanning segment; that stretch reads VFLTCGVAATGGLIIGYDIGI. At 46-82 the chain is on the extracellular side; it reads SGGVTSMDTFLGKFFPSVLHQEQTAQGTSQYCKFNSQ. Residues 83–103 form a helical membrane-spanning segment; that stretch reads PLTAFTSSLYLAALVASFFVA. Over 104 to 111 the chain is Cytoplasmic; the sequence is SFTRALGR. Residues 112–132 form a helical membrane-spanning segment; it reads KWSMFGGGVSFLAGATLNGAA. Topologically, residues 133–134 are extracellular; that stretch reads RN. A helical membrane pass occupies residues 135–155; the sequence is VAMLIVGRILLGIGVAFCGLS. Residues 156–169 lie on the Cytoplasmic side of the membrane; it reads TPIYLSEMAPPRLR. The chain crosses the membrane as a helical span at residues 170–190; it reads GMLNIGLQLMITVGIFSANLV. Residues 191-204 lie on the Extracellular side of the membrane; the sequence is NYGAAKIRGGWGWR. A helical transmembrane segment spans residues 205 to 225; it reads VSLGLAAAPACVIAVGSLFLP. At 226-291 the chain is on the cytoplasmic side; it reads DSPSSLINRG…DVLQRRYRPQ (66 aa). The chain crosses the membrane as a helical span at residues 292-312; that stretch reads LAMAVLIPFFQQLTGINVIMF. Residues 313 to 329 lie on the Extracellular side of the membrane; it reads YAPVLFKTIGLGGDASL. The chain crosses the membrane as a helical span at residues 330–350; that stretch reads MSAVITGLVNIVATFVSIATV. At 351–361 the chain is on the cytoplasmic side; the sequence is DSLGRRKLLFQ. Residues 362–382 form a helical membrane-spanning segment; sequence GGCQMLVSQVIIGTLIGVVFG. Residues 383–391 are Extracellular-facing; it reads TSGDGNISR. A helical membrane pass occupies residues 392–412; the sequence is ALAVCIVVFICVYVAGFAWSW. Residues 413–434 lie on the Cytoplasmic side of the membrane; sequence GPLGVLLPSEIFPLEVRPAGQS. A helical transmembrane segment spans residues 435–455; the sequence is ISVAVNMLCTFAVAEAFLPML. Topologically, residues 456–459 are extracellular; that stretch reads CHMR. Residues 460-480 form a helical membrane-spanning segment; the sequence is FGLFYFFSGWVLVMTLFVSAF. Over 481–522 the chain is Cytoplasmic; the sequence is LPETKGVPIEKMTVVWRTHWFWGRFYCNQDADAHVQVANSKV.

The protein belongs to the major facilitator superfamily. Sugar transporter (TC 2.A.1.1) family.

It is found in the membrane. Mediates active uptake of hexoses by sugar:proton symport. Can transport glucose. This chain is Sugar transport protein MST2, found in Oryza sativa subsp. japonica (Rice).